Reading from the N-terminus, the 510-residue chain is GMP synthase [glutamine-hydrolyzing] (510 aa).

Positions 5–195 constitute a Glutamine amidotransferase type-1 domain; the sequence is LVIVVDFGGQ…LFDICNLKGD (191 aa). The active-site Nucleophile is the C82. Residues H169 and E171 contribute to the active site. Residues 196-385 enclose the GMPS ATP-PPase domain; the sequence is WSMSSFVDEK…LGIPHKLVWR (190 aa). Position 223–229 (223–229) interacts with ATP; that stretch reads SGGVDSS.

As to quaternary structure, homodimer.

It carries out the reaction XMP + L-glutamine + ATP + H2O = GMP + L-glutamate + AMP + diphosphate + 2 H(+). It participates in purine metabolism; GMP biosynthesis; GMP from XMP (L-Gln route): step 1/1. Its function is as follows. Catalyzes the synthesis of GMP from XMP. The chain is GMP synthase [glutamine-hydrolyzing] from Clostridium kluyveri (strain NBRC 12016).